A 534-amino-acid polypeptide reads, in one-letter code: Chaperonin GroEL, chloroplastic (534 aa).

ATP contacts are provided by residues Thr-29–Pro-32, Asp-86–Thr-90, Gly-414, and Asp-496.

The protein belongs to the chaperonin (HSP60) family. In terms of assembly, forms a cylinder of 14 subunits composed of two heptameric rings stacked back-to-back. Interacts with the co-chaperonin GroES.

Its subcellular location is the plastid. It is found in the chloroplast. The enzyme catalyses ATP + H2O + a folded polypeptide = ADP + phosphate + an unfolded polypeptide.. In terms of biological role, together with its co-chaperonin GroES, plays an essential role in assisting protein folding. The GroEL-GroES system forms a nano-cage that allows encapsulation of the non-native substrate proteins and provides a physical environment optimized to promote and accelerate protein folding. This Galdieria sulphuraria (Red alga) protein is Chaperonin GroEL, chloroplastic.